The sequence spans 1958 residues: Sodium channel protein type 10 subunit alpha (1958 aa).

Over 1–125 (MEFPFGSVGT…FNLIRRTAIK (125 aa)) the chain is Cytoplasmic. The disordered stretch occupies residues 27 to 54 (QIAAHRAAKKGRPKQRGQKDKSEKPRPQ). Over residues 32–42 (RAAKKGRPKQR) the composition is skewed to basic residues. The span at 43–54 (GQKDKSEKPRPQ) shows a compositional bias: basic and acidic residues. One copy of the I repeat lies at 116-404 (FNLIRRTAIK…VTMAYEEQSQ (289 aa)). The helical transmembrane segment at 126–149 (VSVHSWFSIFITVTILVNCVCMTR) threads the bilayer. The Extracellular segment spans residues 150 to 154 (TDLPE). Residues 155-174 (KLEYAFTVVYTFEALIKILA) traverse the membrane as a helical segment. The Cytoplasmic portion of the chain corresponds to 175-187 (RGFCLNEFTYLRD). A helical transmembrane segment spans residues 188–206 (PWNWLDFSVITLAYVGAAI). Topologically, residues 207 to 212 (DLRGIS) are extracellular. The chain crosses the membrane as a helical; Voltage-sensor span at residues 213 to 232 (GLRTFRVLRALKTVSVIPGL). The Cytoplasmic portion of the chain corresponds to 233-248 (KVIVGALIHSVRKLAD). Residues 249 to 272 (VTILTVFCLSVFALVGLQLFKGNL) traverse the membrane as a helical segment. Topologically, residues 273 to 340 (KNKCIKNGTD…PDFNYTSFDS (68 aa)) are extracellular. A disulfide bridge connects residues Cys-276 and Cys-318. N-linked (GlcNAc...) asparagine glycans are attached at residues Asn-279, Asn-288, Asn-311, and Asn-334. The pore-forming intramembrane region spans 341 to 365 (FAWAFLSLFRLMTQDSWERLYQQTL). Topologically, residues 366–372 (RASGKMY) are extracellular. The chain crosses the membrane as a helical span at residues 373–398 (MVFFVLVIFLGSFYLVNLILAVVTMA). The Cytoplasmic segment spans residues 399–658 (YEEQSQATIA…KWKKFKMVLF (260 aa)). Phosphoserine occurs at positions 440, 443, 466, and 478. Disordered stretches follow at residues 444 to 483 (HNGSPLAPKNANERRPRVKSRMSEGSTDDNRSLQSDPYNQ) and 539 to 583 (GRGA…APEG). Pro residues predominate over residues 549-560 (PRSPLPQSPNPG). 2 positions are modified to phosphoserine: Ser-611 and Ser-614. The II repeat unit spans residues 646-910 (CCPKWKKFKM…EDDGEVNNLQ (265 aa)). A helical transmembrane segment spans residues 659–683 (ELVTDPFAELTITLCIVVNTVFMAM). Residues 684-694 (EHYPMTDAFDA) lie on the Extracellular side of the membrane. A helical transmembrane segment spans residues 695-718 (MLQAGNIVFTVFFTMEMAFKIIAF). Topologically, residues 719-726 (DPYYYFQK) are cytoplasmic. Residues 727–746 (KWNIFDCVIVTVSLLELSTS) form a helical membrane-spanning segment. Over 747-752 (KKGSLS) the chain is Extracellular. The helical; Voltage-sensor transmembrane segment at 753-772 (VLRTFRLLRVFKLAKSWPTL) threads the bilayer. Over 773–788 (NMLIKIIGNSVGALGN) the chain is Cytoplasmic. Residues 789–809 (LTFILAIIVFIFALVGKQLLS) traverse the membrane as a helical segment. Residues 810 to 833 (ENYGCRRDGISVWNGERLRWHMCD) lie on the Extracellular side of the membrane. Positions 834 to 854 (FFHSFLVVFRILCGEWIENMW) form an intramembrane region, pore-forming. Over 855–863 (VCMEVSQDY) the chain is Extracellular. Cys-856 and Cys-865 are joined by a disulfide. Residues 864 to 889 (ICLTLFLTVMVLGNLVVLNLFIALLL) traverse the membrane as a helical segment. Over 890-1148 (NSFSADNLTA…GWQVRKTCYR (259 aa)) the chain is Cytoplasmic. The segment at 1006-1094 (DLDELEEDVE…SEGSTVDCPD (89 aa)) is disordered. Residues 1017-1038 (ASQSSWQEESPKGQQELLQQVQ) are compositionally biased toward polar residues. The stretch at 1141–1450 (QVRKTCYRIV…KKYYNAMKKL (310 aa)) is one III repeat. A helical transmembrane segment spans residues 1149 to 1172 (IVEHSWFESFIIFMILLSSGALAF). The Extracellular portion of the chain corresponds to 1173 to 1185 (EDNYLEEKPRVKS). A helical membrane pass occupies residues 1186–1211 (VLEYTDRVFTFIFVFEMLLKWVAYGF). Residues 1212-1217 (KKYFTN) lie on the Cytoplasmic side of the membrane. The chain crosses the membrane as a helical span at residues 1218-1239 (AWCWLDFLIVNISLTSLIAKIL). The Extracellular portion of the chain corresponds to 1240–1243 (EYSD). Residues 1244 to 1265 (VASIKALRTLRALRPLRALSRF) form a helical; Voltage-sensor membrane-spanning segment. At 1266–1284 (EGMRVVVDALVGAIPSIMN) the chain is on the cytoplasmic side. The helical transmembrane segment at 1285–1312 (VLLVCLIFWLIFSIMGVNLFAGKFSRCV) threads the bilayer. Over 1313-1354 (DTRSNPFSVVNSTFVTNKSDCYNQNNTGHFFWVNVKVNFDNV) the chain is Extracellular. Residues Asn-1323, Asn-1329, and Asn-1337 are each glycosylated (N-linked (GlcNAc...) asparagine). An intramembrane region (pore-forming) is located at residues 1355-1376 (AMGYLALLQVATFKGWMDIMYA). The Extracellular portion of the chain corresponds to 1377 to 1392 (AVDSRDINSQPNWEES). A helical transmembrane segment spans residues 1393–1419 (LYMYLYFVVFIIFGGFFTLNLFVGVII). Topologically, residues 1420–1472 (DNFNQQKKKLGGQDIFMTEEQKKYYNAMKKLGSKKPQKPIPRPLNKYQGFVFD) are cytoplasmic. A Phosphoserine; by PKC modification is found at Ser-1452. The IV repeat unit spans residues 1459 to 1758 (IPRPLNKYQG…WEKFDPEATQ (300 aa)). A helical transmembrane segment spans residues 1473 to 1496 (IVTRQAFDIIIMALICLNMITMMV). The Extracellular portion of the chain corresponds to 1497-1507 (ETDNQSEEKTK). Asn-1500 is a glycosylation site (N-linked (GlcNAc...) asparagine). Residues 1508–1531 (VLGRINQFFVAVFTGECVMKMFAL) form a helical membrane-spanning segment. Over 1532 to 1537 (RQYYFT) the chain is Cytoplasmic. A helical transmembrane segment spans residues 1538-1561 (NGWNVFDFIVVILSISSLLFSAIL). At 1562–1573 (SSLESYFSPTLL) the chain is on the extracellular side. Residues 1574-1595 (RVIRLARIGRILRLIRAAKGIR) traverse the membrane as a helical; Voltage-sensor segment. Over 1596-1610 (TLLFALMMSLPALFN) the chain is Cytoplasmic. Residues 1611–1633 (IGLLLFLVMFIYSIFGMASFANV) form a helical membrane-spanning segment. Residues 1634–1647 (IDEAGIDDMFNFKT) lie on the Extracellular side of the membrane. The segment at residues 1648–1670 (FGNSMLCLFQITTSAGWDGLLSP) is an intramembrane region (pore-forming). The Extracellular segment spans residues 1671-1698 (ILNTGPPYCDPNRPNSNGSKGNCGSPAV). N-linked (GlcNAc...) asparagine glycosylation is present at Asn-1687. The chain crosses the membrane as a helical span at residues 1699–1723 (GILFFTTYIIISFLIVVNMYIAVIL). Over 1724 to 1958 (ENFNVATEES…AKEGKSPGPQ (235 aa)) the chain is Cytoplasmic. In terms of domain architecture, IQ spans 1852–1881 (EDISATIIQKAYRNYMLQRSLMLSNPLHVP). Residues 1901–1958 (NDNGGLPDKSETASATSFPPSYDSVTRGLSDRANISTSSSMQNEDEVTAKEGKSPGPQ) are disordered. A compositionally biased stretch (polar residues) spans 1933-1942 (ANISTSSSMQ). Over residues 1947 to 1958 (VTAKEGKSPGPQ) the composition is skewed to basic and acidic residues.

The protein belongs to the sodium channel (TC 1.A.1.10) family. Nav1.8/SCN10A subfamily. The channel consists of an ion conducting pore forming alpha-subunit regulated by one or more associated auxiliary subunits SCN1B, SCN2B and SCN3B; electrophysiological properties may vary depending on the type of the associated beta subunits. Found in a number of complexes with PRX, DYNLT1 and PDZD2. Interacts with proteins such as FSTL1, PRX, DYNLT1, PDZD2, S100A10 and many others. Interacts with NEDD4 and NEDD4L. Ubiquitinated by NEDD4L; which promotes its endocytosis. In terms of processing, phosphorylation at Ser-1452 by PKC in a highly conserved cytoplasmic loop slows inactivation of the sodium channel and reduces peak sodium currents. Post-translationally, lacks the cysteine which covalently binds the conotoxin GVIIJ. This cysteine (position 815) is speculated in other sodium channel subunits alpha to be implied in covalent binding with the sodium channel subunit beta-2 or beta-4. In terms of tissue distribution, expressed in dorsal root ganglion and trigeminal ganglion.

The protein resides in the cell membrane. The catalysed reaction is Na(+)(in) = Na(+)(out). Tetrodotoxin-resistant channel that mediates the voltage-dependent sodium ion permeability of excitable membranes. Assuming opened or closed conformations in response to the voltage difference across the membrane, the protein forms a sodium-selective channel through which sodium ions may pass in accordance with their electrochemical gradient. Plays a role in neuropathic pain mechanisms. This Mus musculus (Mouse) protein is Sodium channel protein type 10 subunit alpha.